Consider the following 1030-residue polypeptide: Putative pentatricopeptide repeat-containing protein At5g06400, mitochondrial (1030 aa).

Residues 1-77 (MKALFRFKSC…VKLDETTRLR (77 aa)) constitute a mitochondrion transit peptide. PPR repeat units follow at residues 188–222 (RVGIYNTMLSIAGEARNLDMVDELVSEMEKNGCDK), 223–257 (DIRTWTILISVYGKAKKIGKGLLVFEKMRKSGFEL), 258–292 (DATAYNIMIRSLCIAGRGDLALEFYKEMMEKGITF), 293–323 (GLRTYKMLLDCIAKSEKVDVVQSIADDMVRI), 328–362 (EHDAFGYLLKSFCVSGKIKEALELIRELKNKEMCL), 363–393 (DAKYFEILVKGLCRANRMVDALEIVDIMKRR), 397–431 (DSNVYGIIISGYLRQNDVSKALEQFEVIKKSGRPP), 432–466 (RVSTYTEIMQHLFKLKQFEKGCNLFNEMIENGIEP), 467–501 (DSVAITAVVAGHLGQNRVAEAWKVFSSMEEKGIKP), 502–536 (TWKSYSIFVKELCRSSRYDEIIKIFNQMHASKIVI), 677–711 (NSEAYNMSIKVAGCGKDFKQMRSLFYEMRRQGCLI), 712–746 (TQDTWAIMIMQYGRTGLTNIAIRTFKEMKDMGLIP), 747–783 (SSSTFKCLITVLCEKKGRNVEEATRTFREMIRSGFVP), 784–814 (DRELVQDYLGCLCEVGNTKDAKSCLDSLGKI), 818–852 (VTVAYSIYIRALCRIGKLEEALSELASFEGERSLL), 853–887 (DQYTYGSIVHGLLQRGDLQKALDKVNSMKEIGTKP), 888–922 (GVHVYTSLIVYFFKEKQLEKVLETCQKMEGESCEP), 923–957 (SVVTYTAMICGYMSLGKVEEAWNAFRNMEERGTSP), and 958–992 (DFKTYSKFINCLCQACKSEDALKLLSEMLDKGIAP).

The protein belongs to the PPR family. P subfamily.

It is found in the mitochondrion. In Arabidopsis thaliana (Mouse-ear cress), this protein is Putative pentatricopeptide repeat-containing protein At5g06400, mitochondrial.